Here is a 506-residue protein sequence, read N- to C-terminus: tRNA-2-methylthio-N(6)-dimethylallyladenosine synthase (506 aa).

Residues 14–132 (KSYEVRTYGC…LPVLLERARV (119 aa)) form the MTTase N-terminal domain. Positions 23, 61, 95, 169, 173, and 176 each coordinate [4Fe-4S] cluster. The Radical SAM core domain occupies 155–386 (RESAYAAWVS…ALQEQISWDE (232 aa)). The region spanning 388–456 (KKQVGRTLDV…PHHLLAEGTP (69 aa)) is the TRAM domain.

Belongs to the methylthiotransferase family. MiaB subfamily. In terms of assembly, monomer. The cofactor is [4Fe-4S] cluster.

It is found in the cytoplasm. The catalysed reaction is N(6)-dimethylallyladenosine(37) in tRNA + (sulfur carrier)-SH + AH2 + 2 S-adenosyl-L-methionine = 2-methylsulfanyl-N(6)-dimethylallyladenosine(37) in tRNA + (sulfur carrier)-H + 5'-deoxyadenosine + L-methionine + A + S-adenosyl-L-homocysteine + 2 H(+). In terms of biological role, catalyzes the methylthiolation of N6-(dimethylallyl)adenosine (i(6)A), leading to the formation of 2-methylthio-N6-(dimethylallyl)adenosine (ms(2)i(6)A) at position 37 in tRNAs that read codons beginning with uridine. This is tRNA-2-methylthio-N(6)-dimethylallyladenosine synthase from Streptomyces griseus subsp. griseus (strain JCM 4626 / CBS 651.72 / NBRC 13350 / KCC S-0626 / ISP 5235).